The chain runs to 895 residues: Cellulose 1,4-beta-cellobiosidase (895 aa).

A signal peptide spans 1 to 27; sequence MNFRRMLCAAIVLTIVLSIMLPSTVFA. The CBM-cenC domain occupies 40–199; it reads NDLLYERTFD…YLDDVSLYDP (160 aa). A linker region spans residues 199–240; the sequence is PRFVKPVEYVLPQPDVRVNQVGYLPFAKKYATVVSSSTSPLK. Residues 241-815 form a catalytic region; the sequence is WQLLNSANQV…WVTAYLDEID (575 aa). Aspartate 386 functions as the Nucleophile in the catalytic mechanism. Active-site residues include histidine 737, aspartate 786, and glutamate 795. In terms of domain architecture, Dockerin spans 828-894; the sequence is PEVIYGDCNG…ILKEIDVLPH (67 aa).

The protein belongs to the glycosyl hydrolase 9 (cellulase E) family.

It localises to the secreted. The catalysed reaction is Hydrolysis of (1-&gt;4)-beta-D-glucosidic linkages in cellulose and cellotetraose, releasing cellobiose from the non-reducing ends of the chains.. With respect to regulation, inhibited by cellobiose. This chain is Cellulose 1,4-beta-cellobiosidase (celK), found in Acetivibrio thermocellus (Hungateiclostridium thermocellum).